An 84-amino-acid polypeptide reads, in one-letter code: Large ribosomal subunit protein bL27 (84 aa).

The disordered stretch occupies residues 1–20 (MAHKKAGGSTRNGRDSNPKY).

Belongs to the bacterial ribosomal protein bL27 family.

The protein is Large ribosomal subunit protein bL27 of Francisella philomiragia subsp. philomiragia (strain ATCC 25017 / CCUG 19701 / FSC 153 / O#319-036).